The following is a 345-amino-acid chain: Serine/arginine-rich splicing factor 6 (345 aa).

Positions 1 to 72 (MPRVYIGRLS…ERVIVEHARG (72 aa)) constitute an RRM 1 domain. Residues S45, S81, and S84 each carry the phosphoserine modification. Residues 75–102 (RDRDGYSYGSRSGGGGYSSRRTSGRDKY) are disordered. In terms of domain architecture, RRM 2 spans 110–183 (FRLIVENLSS…RNIRLIEDKP (74 aa)). K165 carries the post-translational modification N6-acetyllysine. The disordered stretch occupies residues 176 to 345 (IRLIEDKPRT…RSRSRSSSRD (170 aa)). K182 participates in a covalent cross-link: Glycyl lysine isopeptide (Lys-Gly) (interchain with G-Cter in SUMO2). Over residues 185–250 (TSHRRSYSGS…RKSRSKSKSK (66 aa)) the composition is skewed to basic residues. 2 stretches are compositionally biased toward basic and acidic residues: residues 264-273 (RSKDEYEKSR) and 282-293 (SPKENGKGDIKS). A phosphoserine mark is found at S299 and S301. S305 bears the Phosphoserine; by DYRK1A mark. A phosphoserine mark is found at S316 and S318. A compositionally biased stretch (basic residues) spans 323–345 (RASRSHSRSRSKSRSRSRSSSRD).

The protein belongs to the splicing factor SR family. As to quaternary structure, binds SREK1/SFRS12. Interacts with DYRK1A. Post-translationally, extensively phosphorylated on serine residues in the RS domain. Phosphorylated by DYRK1A, probably in the RS domain. Phosphorylation by DYRK1A modulates alternative splice site selection and inhibits the expression of MAPT/Tau exon 10.

The protein localises to the nucleus. It localises to the nucleus speckle. Functionally, plays a role in constitutive splicing and modulates the selection of alternative splice sites. Plays a role in the alternative splicing of MAPT/Tau exon 10. Binds to alternative exons of TNC pre-mRNA and promotes the expression of alternatively spliced TNC. Plays a role in wound healing and in the regulation of keratinocyte differentiation and proliferation via its role in alternative splicing. The chain is Serine/arginine-rich splicing factor 6 (SRSF6) from Bos taurus (Bovine).